A 161-amino-acid polypeptide reads, in one-letter code: Phosphopantetheine adenylyltransferase (161 aa).

Substrate is bound at residue S11. ATP is bound by residues S11–F12 and H19. K43, L75, and R89 together coordinate substrate. Residues G90 to R92, E100, and Y125 to S131 contribute to the ATP site.

It belongs to the bacterial CoaD family. Homohexamer. The cofactor is Mg(2+).

It is found in the cytoplasm. The catalysed reaction is (R)-4'-phosphopantetheine + ATP + H(+) = 3'-dephospho-CoA + diphosphate. It functions in the pathway cofactor biosynthesis; coenzyme A biosynthesis; CoA from (R)-pantothenate: step 4/5. In terms of biological role, reversibly transfers an adenylyl group from ATP to 4'-phosphopantetheine, yielding dephospho-CoA (dPCoA) and pyrophosphate. In Geotalea daltonii (strain DSM 22248 / JCM 15807 / FRC-32) (Geobacter daltonii), this protein is Phosphopantetheine adenylyltransferase.